A 151-amino-acid polypeptide reads, in one-letter code: MVVNKQGSVKSIKRKARKSRKVTTGRAKEFSYKGYTLEQLQEMSLEELIKILPARARRSLSREMNHDQKKLVEKLEGDYDDIKTHVRDVIILPSYVGKIVEVYNGNSYSKFEIKPEMIGHYLGEFVMTRKEVKHSGPGVGATRSSKFMPLK.

The tract at residues 1 to 23 (MVVNKQGSVKSIKRKARKSRKVT) is disordered. The span at 11-23 (SIKRKARKSRKVT) shows a compositional bias: basic residues.

It belongs to the universal ribosomal protein uS19 family.

Protein S19 forms a complex with S13 that binds strongly to the 16S ribosomal RNA. This is Small ribosomal subunit protein uS19 (rps19) from Thermoplasma volcanium (strain ATCC 51530 / DSM 4299 / JCM 9571 / NBRC 15438 / GSS1).